A 363-amino-acid chain; its full sequence is Heme A synthase (363 aa).

The next 8 membrane-spanning stretches (helical) occupy residues 21-41, 107-127, 138-158, 174-194, 207-227, 268-288, 301-321, and 323-343; these read ALVRGWLYVVLLVLFALVLVG, RLLARSVGLVFALPLLFFWVS, LVGILLLGGLQGAIGWWMVAS, HLTLAALIFTATMVVARGLAP, LAGFIVLLALIQIYLGGLVAG, FVHRLGAYTVFAVALWHMIAT, ATLLFVLVLVQASIGIGTLLM, and VPLHMALTHQGFALIVLGFAA. Residue His270 participates in heme binding. His331 contacts heme.

Belongs to the COX15/CtaA family. Type 2 subfamily. In terms of assembly, interacts with CtaB. It depends on heme b as a cofactor.

It localises to the cell membrane. It catalyses the reaction Fe(II)-heme o + 2 A + H2O = Fe(II)-heme a + 2 AH2. It functions in the pathway porphyrin-containing compound metabolism; heme A biosynthesis; heme A from heme O: step 1/1. Functionally, catalyzes the conversion of heme O to heme A by two successive hydroxylations of the methyl group at C8. The first hydroxylation forms heme I, the second hydroxylation results in an unstable dihydroxymethyl group, which spontaneously dehydrates, resulting in the formyl group of heme A. This Mesorhizobium japonicum (strain LMG 29417 / CECT 9101 / MAFF 303099) (Mesorhizobium loti (strain MAFF 303099)) protein is Heme A synthase.